The following is a 217-amino-acid chain: Adenylate kinase (217 aa).

10-15 (GAGKGT) serves as a coordination point for ATP. The NMP stretch occupies residues 30–59 (STGDMLRAAVKAGTPLGVEAKKVMDAGGLV). Residues threonine 31, arginine 36, 57-59 (GLV), 85-88 (GFPR), and glutamine 92 contribute to the AMP site. The interval 122 to 159 (GRRAHLASGRTYHVKYNPPKVAGKDDLTGEDLVQRDDD) is LID. Residues arginine 123 and 132–133 (TY) each bind ATP. Arginine 156 and arginine 167 together coordinate AMP. Glycine 203 provides a ligand contact to ATP.

Belongs to the adenylate kinase family. As to quaternary structure, monomer.

Its subcellular location is the cytoplasm. It carries out the reaction AMP + ATP = 2 ADP. It participates in purine metabolism; AMP biosynthesis via salvage pathway; AMP from ADP: step 1/1. Functionally, catalyzes the reversible transfer of the terminal phosphate group between ATP and AMP. Plays an important role in cellular energy homeostasis and in adenine nucleotide metabolism. This Aromatoleum aromaticum (strain DSM 19018 / LMG 30748 / EbN1) (Azoarcus sp. (strain EbN1)) protein is Adenylate kinase.